The primary structure comprises 509 residues: AAA ATPase forming ring-shaped complexes (509 aa).

Residues 11–50 (AHLQRTISNLSARNAKLAELLKASRDKLSILQDQLEDLAA) adopt a coiled-coil conformation. Residue 236-241 (GCGKTL) participates in ATP binding.

This sequence belongs to the AAA ATPase family. Homohexamer. Assembles into a hexameric ring structure.

This is AAA ATPase forming ring-shaped complexes from Corynebacterium diphtheriae (strain ATCC 700971 / NCTC 13129 / Biotype gravis).